The sequence spans 190 residues: Peptidyl-tRNA hydrolase (190 aa).

A tRNA-binding site is contributed by Phe-14. His-19 serves as the catalytic Proton acceptor. 3 residues coordinate tRNA: Met-64, Asn-66, and Asn-112.

Belongs to the PTH family. In terms of assembly, monomer.

It is found in the cytoplasm. The enzyme catalyses an N-acyl-L-alpha-aminoacyl-tRNA + H2O = an N-acyl-L-amino acid + a tRNA + H(+). In terms of biological role, hydrolyzes ribosome-free peptidyl-tRNAs (with 1 or more amino acids incorporated), which drop off the ribosome during protein synthesis, or as a result of ribosome stalling. Its function is as follows. Catalyzes the release of premature peptidyl moieties from peptidyl-tRNA molecules trapped in stalled 50S ribosomal subunits, and thus maintains levels of free tRNAs and 50S ribosomes. The protein is Peptidyl-tRNA hydrolase of Staphylococcus aureus (strain Mu3 / ATCC 700698).